We begin with the raw amino-acid sequence, 1597 residues long: Rho guanine nucleotide exchange factor 5 (1597 aa).

3 disordered regions span residues 138 to 246 (PFSS…EGTL), 258 to 455 (EEQM…SLEP), and 467 to 1072 (GSFL…VFRE). The residue at position 184 (serine 184) is a Phosphoserine. Positions 192 to 204 (ETNQNEGSESGTI) are enriched in polar residues. Positions 217 to 237 (ESQGLLHPQEVQVLEEQGQQE) are enriched in low complexity. The segment covering 266 to 278 (NDEKGEQKQKQEQ) has biased composition (basic and acidic residues). Positions 299–309 (GLNDGEWEQED) are enriched in acidic residues. Basic and acidic residues-rich tracts occupy residues 323-368 (GEER…KEKG) and 394-404 (RSREEENEHHG). Polar residues predominate over residues 428–438 (LMTQIPGTQTE). A phosphoserine mark is found at serine 445 and serine 450. The span at 474-490 (SPDKEIDQNSQQEESRL) shows a compositional bias: basic and acidic residues. The span at 512 to 522 (PRTPDSAPPSP) shows a compositional bias: pro residues. 2 stretches are compositionally biased toward polar residues: residues 583-601 (STGT…TVQH) and 655-682 (DYST…NLER). Residues 731–746 (QRRDTHPSVVETDGHA) are compositionally biased toward basic and acidic residues. 2 stretches are compositionally biased toward pro residues: residues 812–828 (PLPP…PPIS) and 838–856 (PLPP…PLPP). Arginine 866 bears the Asymmetric dimethylarginine mark. The span at 901-920 (ATARSTESFTSTSRSKSEVS) shows a compositional bias: low complexity. Residues 926–941 (SNMTNFLCPSSPTTPW) show a composition bias toward polar residues. Residues 950–969 (SKDEAGVSEHPEAPAREPLR) show a composition bias toward basic and acidic residues. Residues serine 983, serine 1011, and serine 1044 each carry the phosphoserine modification. The segment covering 990–1012 (QPEKPSHLHLEKASSWPHRRDSG) has biased composition (basic and acidic residues). Over residues 1057–1072 (AVEKHPGPSDTVVFRE) the composition is skewed to basic and acidic residues. The residue at position 1126 (serine 1126) is a Phosphoserine. Residues 1174–1358 (KLQEVKFELI…EQLIRDCNNN (185 aa)) enclose the DH domain. In terms of domain architecture, PH spans 1390-1502 (WLVKSGELTA…WISALAMPRE (113 aa)). One can recognise an SH3 domain in the interval 1510 to 1571 (YNSPQVQCLR…PVQQVEFISN (62 aa)).

As to quaternary structure, interacts with SRC. Forms a ternary complex with SRC and the PI3K 85 kDa subunit. Interacts with and is activated by the heterodimer formed by GNB1 and GNG2. Interacts with ODAM (via C-terminus). Interacts with RHOA. Post-translationally, activation of SRC induces tyrosine phosphorylation of ARHGEF5. As to expression, ubiquitously expressed with highest levels in placenta. High levels are also found in colon, kidney, trachea, prostate, liver, pancreas, pituitary gland, thyroid gland and mammary gland. In fetal tissues, expressed at high levels in kidney, lung and liver. Expressed at low levels in lung and heart.

The protein localises to the cytoplasm. The protein resides in the nucleus. It is found in the cell projection. It localises to the podosome. Functionally, guanine nucleotide exchange factor which activates Rho GTPases. Strongly activates RHOA. Also strongly activates RHOB, weakly activates RHOC and RHOG and shows no effect on RHOD, RHOV, RHOQ or RAC1. Involved in regulation of cell shape and actin cytoskeletal organization. Plays a role in actin organization by generating a loss of actin stress fibers and the formation of membrane ruffles and filopodia. Required for SRC-induced podosome formation. Involved in positive regulation of immature dendritic cell migration. The protein is Rho guanine nucleotide exchange factor 5 (ARHGEF5) of Homo sapiens (Human).